Reading from the N-terminus, the 434-residue chain is MSHEEDLIDYSDEELQTTDAAATTATPAANGGQAKKDGELTVTGGRADKKGSYVGIHSTGFRDFLLKGELLRAITDCGFEHPSEVQQVCIPTAILNVDVLCQAKSGLGKTAVFVLTTLHQLEPVPGECSVLVMCHTRELAYQIKNEYARFSKYLPDVKTAVFYGGTPIQKDIEVLSNKDTFPNIIVGTPGRLNALVRDKKLSLRNVKAFVLDECDKMLDQIDMRRDVQEIFRATPTDKQVMMFSATLSQDVRPICKKFMRNPLEVYVDDDTKLTLHGLQQYYIKLSEAEKNRKLNELLDSLEFNQVIIFVKSTIRANELDKLLRECNFPSIAVHSGRYKEFKEFNKRICVATDVFGRGIDIERINLAINYDLPADADSYLHRVGRAGRFGTKGLSISFVSTPEDEQVLKDIEKRFEVALPEYPEEGVDSSTYMA.

Positions T59–Q87 match the Q motif motif. The region spanning I90–V265 is the Helicase ATP-binding domain. A103–T110 provides a ligand contact to ATP. The DECD box motif lies at D212–D215. Positions K293 to S430 constitute a Helicase C-terminal domain.

The protein belongs to the DEAD box helicase family. DECD subfamily.

The protein resides in the nucleus. The catalysed reaction is ATP + H2O = ADP + phosphate + H(+). In terms of biological role, ATP-binding RNA helicase involved in transcription elongation and required for the export of mRNA out of the nucleus. SUB2 also plays a role in pre-mRNA splicing and spliceosome assembly. May be involved in rDNA and telomeric silencing, and maintenance of genome integrity. The chain is ATP-dependent RNA helicase sub2 (sub2) from Emericella nidulans (strain FGSC A4 / ATCC 38163 / CBS 112.46 / NRRL 194 / M139) (Aspergillus nidulans).